The chain runs to 530 residues: Chitin synthase 1 (530 aa).

Asn17 carries an N-linked (GlcNAc...) asparagine glycan. The interval 22–94 is disordered; the sequence is QESSSNLIQQ…QANNNRKVTR (73 aa). Residues 24 to 56 are compositionally biased toward polar residues; the sequence is SSSNLIQQQQPGTNYARNQQTLSSLRSQKQQAE. 3 N-linked (GlcNAc...) asparagine glycosylation sites follow: Asn118, Asn310, and Asn474. The next 2 helical transmembrane spans lie at 477 to 497 and 508 to 528; these read FFAGVYGLIHFSKIWNSGHGF and IYNVISLIFSWFSVVIVLSFL.

This sequence belongs to the chitin synthase family. Class II subfamily.

It is found in the cell membrane. The enzyme catalyses [(1-&gt;4)-N-acetyl-beta-D-glucosaminyl](n) + UDP-N-acetyl-alpha-D-glucosamine = [(1-&gt;4)-N-acetyl-beta-D-glucosaminyl](n+1) + UDP + H(+). In terms of biological role, polymerizes chitin, a structural polymer of the cell wall and septum, by transferring the sugar moiety of UDP-GlcNAc to the non-reducing end of the growing chitin polymer. This is Chitin synthase 1 from Rhizopus delemar (strain RA 99-880 / ATCC MYA-4621 / FGSC 9543 / NRRL 43880) (Mucormycosis agent).